We begin with the raw amino-acid sequence, 114 residues long: NADH-quinone oxidoreductase subunit K 2 (114 aa).

Transmembrane regions (helical) follow at residues 1 to 21 (MIVPFGHVLLLAGALFGLGVF), 29 to 49 (LIMIVLGVEIMLNAASIAFIG), and 62 to 82 (FVLFILAVAATEVSIGLAIIV).

Belongs to the complex I subunit 4L family. In terms of assembly, NDH-1 is composed of 14 different subunits. Subunits NuoA, H, J, K, L, M, N constitute the membrane sector of the complex.

The protein localises to the cell inner membrane. It catalyses the reaction a quinone + NADH + 5 H(+)(in) = a quinol + NAD(+) + 4 H(+)(out). Functionally, NDH-1 shuttles electrons from NADH, via FMN and iron-sulfur (Fe-S) centers, to quinones in the respiratory chain. The immediate electron acceptor for the enzyme in this species is believed to be ubiquinone. Couples the redox reaction to proton translocation (for every two electrons transferred, four hydrogen ions are translocated across the cytoplasmic membrane), and thus conserves the redox energy in a proton gradient. In Syntrophobacter fumaroxidans (strain DSM 10017 / MPOB), this protein is NADH-quinone oxidoreductase subunit K 2.